Reading from the N-terminus, the 322-residue chain is MQYVGIQTQQSRNNLRSGILLILFPCLVAVLTYLFCYLLITFTVEDDYGQYNTLAMTNQMFINLIPYIIGGVLVWFIIAYFTNSSIIKAATGARPLERKENKRIYNLVENLCMSQGMKMPKINIIDDDSLNAYASGINEQTYTITLSKGIIEKLNDEELEGVIAHELTHIRNHDVRLLIISIVFVGIFSMLAQIALRSVYYSSWTRSRNDKNNGAILILVLAMIVAAIGYFFATLMRFAISRKREYMADAGAAEMTKNPLALASALRKISADPDIEAVEREDVAQLFIQHPGKQAKSALSGLSGLFATHPPIEKRIAILEQF.

Transmembrane regions (helical) follow at residues I19 to L39 and F61 to F81. Position 165 (H165) interacts with Zn(2+). Residue E166 is part of the active site. H169 is a Zn(2+) binding site. Helical transmembrane passes span V175–A195 and I216–M236. E245 provides a ligand contact to Zn(2+).

The protein belongs to the peptidase M48B family. It depends on Zn(2+) as a cofactor.

It is found in the cell inner membrane. In Bacteroides fragilis (strain YCH46), this protein is Protease HtpX homolog.